We begin with the raw amino-acid sequence, 243 residues long: Phosphate-specific transport system accessory protein PhoU (243 aa).

It belongs to the PhoU family. In terms of assembly, homodimer. Interacts with phosphate regulon transcriptional regulatory protein PhoB and ferric uptake regulation protein Fur.

It localises to the cytoplasm. Part of the phosphate (Pho) regulon, which plays a key role in phosphate homeostasis. Encoded together with proteins of the phosphate-specific transport (Pst) system in the polycistronic pstSCAB-phoU operon. PhoU is essential for the repression of the Pho regulon at high phosphate conditions. In this role, it may bind, possibly as a chaperone, to PhoR, PhoB or a PhoR-PhoB complex to promote dephosphorylation of phospho-PhoB, or inhibit formation of the PhoR-PhoB transitory complex. This is Phosphate-specific transport system accessory protein PhoU from Edwardsiella tarda.